The sequence spans 117 residues: Large ribosomal subunit protein bL20 (117 aa).

It belongs to the bacterial ribosomal protein bL20 family.

Functionally, binds directly to 23S ribosomal RNA and is necessary for the in vitro assembly process of the 50S ribosomal subunit. It is not involved in the protein synthesizing functions of that subunit. The protein is Large ribosomal subunit protein bL20 of Campylobacter jejuni subsp. jejuni serotype O:2 (strain ATCC 700819 / NCTC 11168).